Here is a 358-residue protein sequence, read N- to C-terminus: NADH-quinone oxidoreductase subunit H (358 aa).

The next 8 helical transmembrane spans lie at 20-40, 95-115, 128-148, 168-188, 206-226, 253-273, 290-310, and 334-354; these read ITVG…IPLI, ALFY…WAVI, IGLL…IIAG, ISYE…SGSM, VFSW…ISAV, GFAF…ISAL, WGFI…AVLY, and VLIP…ISPL.

The protein belongs to the complex I subunit 1 family. NDH-1 is composed of 14 different subunits. Subunits NuoA, H, J, K, L, M, N constitute the membrane sector of the complex.

The protein resides in the cell inner membrane. The catalysed reaction is a quinone + NADH + 5 H(+)(in) = a quinol + NAD(+) + 4 H(+)(out). Functionally, NDH-1 shuttles electrons from NADH, via FMN and iron-sulfur (Fe-S) centers, to quinones in the respiratory chain. The immediate electron acceptor for the enzyme in this species is believed to be ubiquinone. Couples the redox reaction to proton translocation (for every two electrons transferred, four hydrogen ions are translocated across the cytoplasmic membrane), and thus conserves the redox energy in a proton gradient. This subunit may bind ubiquinone. The polypeptide is NADH-quinone oxidoreductase subunit H (Neisseria meningitidis serogroup C (strain 053442)).